Reading from the N-terminus, the 833-residue chain is pre-rRNA 2'-O-ribose RNA methyltransferase (833 aa).

S-adenosyl-L-methionine is bound by residues G57, W59, D77, D93, and D118. K158 functions as the Proton acceptor in the catalytic mechanism. Disordered regions lie at residues 323-349 (KLDN…MEEN), 363-453 (KKKR…DEYL), 475-640 (LDDV…SDED), 730-767 (LGKK…SGTD), and 779-833 (IAKK…KNKK). The stretch at 336-386 (EEKKELTAEEMEENLQEEMKEYLALVEKKKRKEKKRQNELKRKHQRKIELT) forms a coiled coil. Over residues 363–381 (KKKRKEKKRQNELKRKHQR) the composition is skewed to basic residues. A compositionally biased stretch (basic and acidic residues) spans 382–396 (KIELTMHIPGDKIEE). A compositionally biased stretch (acidic residues) spans 423 to 441 (SSDEFDSDDSDDDDDDDNN). Residues 455-485 (QQLDEQYKLYQQRIRKKAAKLDDVKVKKDKI) adopt a coiled-coil conformation. Basic and acidic residues predominate over residues 475–486 (LDDVKVKKDKIG). 2 stretches are compositionally biased toward acidic residues: residues 490–503 (YNED…EQEE) and 542–556 (SESE…DQDD). The segment covering 557 to 566 (ENNKPIDISK) has biased composition (basic and acidic residues). Acidic residues-rich tracts occupy residues 605–614 (DKDDQDDDDD) and 626–640 (PVQE…SDED). 3 stretches are compositionally biased toward basic and acidic residues: residues 732–741 (KKMEKTRDKA), 751–767 (SNRE…SGTD), and 794–806 (KIVD…DLRA).

It belongs to the class I-like SAM-binding methyltransferase superfamily. RNA methyltransferase RlmE family. SPB1 subfamily.

The protein resides in the nucleus. The protein localises to the nucleolus. It carries out the reaction a ribonucleotide in rRNA + S-adenosyl-L-methionine = a 2'-O-methylribonucleotide in rRNA + S-adenosyl-L-homocysteine + H(+). RNA 2'-O-methyltransferase involved in the maturation of rRNA and in the biogenesis of ribosomal subunits. This chain is pre-rRNA 2'-O-ribose RNA methyltransferase (fsjC), found in Dictyostelium discoideum (Social amoeba).